The following is a 441-amino-acid chain: Acetyltransferase TRI7 (441 aa).

7 consecutive transmembrane segments (helical) span residues 14–34 (GILYYTSTLLAVCTYAALIII), 75–95 (SLTLALTALFILQCCNFLVLT), 158–178 (IWFILRQSLIVAWQCLLLDII), 306–326 (IAFVFLGSAVVHMAIDSFCWG), 336–356 (LAFFGSLVVGIIIEDTIQALC), 377–397 (LVGYIWVSFWFMMTSPWYLYH), and 421–441 (TATMLLFGSGVILKFAIGIEV).

This sequence belongs to the wax synthase family.

It is found in the membrane. The protein operates within sesquiterpene biosynthesis; trichothecene biosynthesis. In terms of biological role, acetyltransferase; part of the core gene cluster that mediates the biosynthesis of trichothecenes, a very large family of chemically related bicyclic sesquiterpene compounds acting as mycotoxins, including T2-toxin. The biosynthesis of trichothecenes begins with the cyclization of farnesyl diphosphate to trichodiene and is catalyzed by the trichodiene synthase TRI5. Trichodiene undergoes a series of oxygenations catalyzed by the cytochrome P450 monooxygenase TRI4. TRI4 controls the addition of four oxygens at C-2, C-3, C-11, and the C-12, C-13-epoxide to form the intermediate isotrichotriol. Isotrichotriol then undergoes a non-enzymatic isomerization and cyclization to form isotrichodermol. During this process, the oxygen at the C-2 position becomes the pyran ring oxygen and the hydroxyl group at C-11 is lost. More complex type A trichothecenes are built by modifying isotrichodermol through a series of paired hydroxylation and acetylation or acylation steps. Isotrichodermol is converted to isotrichodermin by the acetyltransferase TRI101. TRI101 encodes a C-3 transacetylase that acts as a self-protection or resistance factor during biosynthesis and that the presence of a free C-3 hydroxyl group is a key component of Fusarium trichothecene phytotoxicity. A second hydroxyl group is added to C-15 by the trichothecene C-15 hydroxylase TRI11, producing 15-decalonectrin, which is then acetylated by TRI3, producing calonectrin. A third hydroxyl group is added at C-4 by the cytochrome P450 monooxygenase TRI13, converting calonectrin to 3,15-diacetoxyspirpenol, which is subsequently acetylated by the acetyltransferase TRI7. A fourth hydroxyl group is added to C-8 by the cytochrome P450 monooxygenase TRI1, followed by the addition of an isovaleryl moiety by TRI16. Finally, the acetyl group is removed from the C-3 position by the trichothecene C-3 esterase TRI8 to produce T-2 toxin. The protein is Acetyltransferase TRI7 of Fusarium sporotrichioides.